Consider the following 98-residue polypeptide: Integration host factor subunit alpha (98 aa).

Belongs to the bacterial histone-like protein family. In terms of assembly, heterodimer of an alpha and a beta chain.

Its function is as follows. This protein is one of the two subunits of integration host factor, a specific DNA-binding protein that functions in genetic recombination as well as in transcriptional and translational control. This Acinetobacter baumannii (strain AB307-0294) protein is Integration host factor subunit alpha.